The sequence spans 311 residues: Ribosomal RNA small subunit methyltransferase H (311 aa).

S-adenosyl-L-methionine contacts are provided by residues 39–41, Asp-59, Phe-87, Asp-102, and His-109; that span reads GGH.

It belongs to the methyltransferase superfamily. RsmH family.

The protein localises to the cytoplasm. It catalyses the reaction cytidine(1402) in 16S rRNA + S-adenosyl-L-methionine = N(4)-methylcytidine(1402) in 16S rRNA + S-adenosyl-L-homocysteine + H(+). Specifically methylates the N4 position of cytidine in position 1402 (C1402) of 16S rRNA. This Porphyromonas gingivalis (strain ATCC 33277 / DSM 20709 / CIP 103683 / JCM 12257 / NCTC 11834 / 2561) protein is Ribosomal RNA small subunit methyltransferase H.